The following is a 126-amino-acid chain: UPF0738 protein BH2850 (126 aa).

The protein belongs to the UPF0738 family.

The chain is UPF0738 protein BH2850 from Halalkalibacterium halodurans (strain ATCC BAA-125 / DSM 18197 / FERM 7344 / JCM 9153 / C-125) (Bacillus halodurans).